Consider the following 450-residue polypeptide: Glucose-6-phosphate isomerase (450 aa).

At Thr38 the chain carries Phosphothreonine. Glu290 functions as the Proton donor in the catalytic mechanism. Catalysis depends on residues His311 and Lys425.

Belongs to the GPI family.

The protein resides in the cytoplasm. The catalysed reaction is alpha-D-glucose 6-phosphate = beta-D-fructose 6-phosphate. The protein operates within carbohydrate biosynthesis; gluconeogenesis. It functions in the pathway carbohydrate degradation; glycolysis; D-glyceraldehyde 3-phosphate and glycerone phosphate from D-glucose: step 2/4. Catalyzes the reversible isomerization of glucose-6-phosphate to fructose-6-phosphate. The chain is Glucose-6-phosphate isomerase from Bacillus subtilis (strain 168).